The following is a 152-amino-acid chain: Protein SprT-like (152 aa).

The SprT-like domain occupies 7–148; that stretch reads QRLVEEVSLQ…GKCKGKLILI (142 aa). A Zn(2+)-binding site is contributed by His67. The active site involves Glu68. His71 contributes to the Zn(2+) binding site.

It belongs to the SprT family. Zn(2+) serves as cofactor.

It is found in the cytoplasm. This chain is Protein SprT-like, found in Bacillus cereus (strain AH187).